Here is a 182-residue protein sequence, read N- to C-terminus: uncharacterized protein (182 aa).

The protein belongs to the mimivirus L28/L54 family.

This is an uncharacterized protein from Acanthamoeba polyphaga (Amoeba).